The following is a 490-amino-acid chain: Protein nucleotidyltransferase YdiU (490 aa).

Residues Gly94, Gly96, Arg97, Lys117, Asp129, Gly130, Arg180, and Arg187 each contribute to the ATP site. Catalysis depends on Asp256, which acts as the Proton acceptor. Mg(2+) contacts are provided by Asn257 and Asp266. Asp266 serves as a coordination point for ATP.

Belongs to the SELO family. Mg(2+) is required as a cofactor. Mn(2+) serves as cofactor.

The catalysed reaction is L-seryl-[protein] + ATP = 3-O-(5'-adenylyl)-L-seryl-[protein] + diphosphate. It catalyses the reaction L-threonyl-[protein] + ATP = 3-O-(5'-adenylyl)-L-threonyl-[protein] + diphosphate. The enzyme catalyses L-tyrosyl-[protein] + ATP = O-(5'-adenylyl)-L-tyrosyl-[protein] + diphosphate. It carries out the reaction L-histidyl-[protein] + UTP = N(tele)-(5'-uridylyl)-L-histidyl-[protein] + diphosphate. The catalysed reaction is L-seryl-[protein] + UTP = O-(5'-uridylyl)-L-seryl-[protein] + diphosphate. It catalyses the reaction L-tyrosyl-[protein] + UTP = O-(5'-uridylyl)-L-tyrosyl-[protein] + diphosphate. Its function is as follows. Nucleotidyltransferase involved in the post-translational modification of proteins. It can catalyze the addition of adenosine monophosphate (AMP) or uridine monophosphate (UMP) to a protein, resulting in modifications known as AMPylation and UMPylation. The chain is Protein nucleotidyltransferase YdiU from Clostridium perfringens (strain ATCC 13124 / DSM 756 / JCM 1290 / NCIMB 6125 / NCTC 8237 / Type A).